A 445-amino-acid chain; its full sequence is 3-phosphoshikimate 1-carboxyvinyltransferase (445 aa).

Lys28, Ser29, and Arg33 together coordinate 3-phosphoshikimate. Lys28 provides a ligand contact to phosphoenolpyruvate. Residues Gly101 and Arg129 each contribute to the phosphoenolpyruvate site. Residues Ser175, Gln177, Asp328, and Lys355 each coordinate 3-phosphoshikimate. Gln177 serves as a coordination point for phosphoenolpyruvate. The Proton acceptor role is filled by Asp328. Residues Arg359 and Arg402 each contribute to the phosphoenolpyruvate site.

The protein belongs to the EPSP synthase family. Monomer.

The protein localises to the cytoplasm. It carries out the reaction 3-phosphoshikimate + phosphoenolpyruvate = 5-O-(1-carboxyvinyl)-3-phosphoshikimate + phosphate. It functions in the pathway metabolic intermediate biosynthesis; chorismate biosynthesis; chorismate from D-erythrose 4-phosphate and phosphoenolpyruvate: step 6/7. In terms of biological role, catalyzes the transfer of the enolpyruvyl moiety of phosphoenolpyruvate (PEP) to the 5-hydroxyl of shikimate-3-phosphate (S3P) to produce enolpyruvyl shikimate-3-phosphate and inorganic phosphate. The chain is 3-phosphoshikimate 1-carboxyvinyltransferase from Bradyrhizobium sp. (strain BTAi1 / ATCC BAA-1182).